A 705-amino-acid polypeptide reads, in one-letter code: Solute carrier family 28 member 3 (705 aa).

The span at 1–21 shows a compositional bias: basic and acidic residues; it reads MSRSDPDPGKNSEPSKSKMSL. Positions 1–96 are disordered; that stretch reads MSRSDPDPGK…TEEESEDERQ (96 aa). The Cytoplasmic portion of the chain corresponds to 1-119; it reads MSRSDPDPGK…FCRKHRVILQ (119 aa). Positions 48 to 63 are enriched in polar residues; sequence APGNSTVRSRVVQSGE. A compositionally biased stretch (basic and acidic residues) spans 65–74; sequence GRAKQDDRQI. A helical transmembrane segment spans residues 120 to 140; the sequence is HTIWAVLLTGFLALVIAACAL. Residues 141–145 are Extracellular-facing; the sequence is NFHRA. A helical transmembrane segment spans residues 146 to 166; the sequence is LPLFVITLVTIFFVVWDRLMA. Residues 167-190 are Cytoplasmic-facing; sequence KYEQRIDDVLSPGKRLLERHWFWL. Residues 191-211 form a helical membrane-spanning segment; that stretch reads KWVVWCSLILAVILWLALDTA. The Extracellular segment spans residues 212–214; the sequence is RLG. Residues 215-236 form a helical membrane-spanning segment; it reads QQQLISFGGLVMYIVLLFLFSK. The Cytoplasmic portion of the chain corresponds to 237–244; it reads HPTRVYWR. The helical transmembrane segment at 245 to 264 threads the bilayer; that stretch reads PVFWGIGLQFLLGLLILRTR. The Extracellular portion of the chain corresponds to 265–301; it reads PGFVAFDWMGKQVQTFLGYTDAGAQFVFGEKYTDHFF. The helical transmembrane segment at 302–322 threads the bilayer; sequence AFKILPIVVFFSTVMSMLYYL. The Cytoplasmic segment spans residues 323–346; that stretch reads GLMQWIIRKVGWLMLVTMGSSPIE. An intramembrane region (helical) is located at residues 347–365; that stretch reads SVVAAGNIFVGQTESPLLV. The Cytoplasmic portion of the chain corresponds to 366 to 378; that stretch reads QPYLPHVTKSELH. Residues 379–401 traverse the membrane as a helical segment; sequence TIMTAGFATIAGSVLGAYISFGV. The Extracellular segment spans residues 402 to 403; it reads SS. The chain crosses the membrane as a helical span at residues 404–425; the sequence is THLLTASVMSAPAALAVAKLFW. At 426-460 the chain is on the cytoplasmic side; that stretch reads PETEKPKITLKNAMKMENGDSRNLLEAATQGASSS. Residues 461–486 traverse the membrane as a helical segment; it reads IPLVANIAANLIAFLALLSFVNSALS. Residues 487 to 524 lie on the Extracellular side of the membrane; sequence WFGSMFDYPQLSFELICSYIFMPFSFMMGVDWQDRFMV. Residues 525 to 544 constitute an intramembrane region (helical); that stretch reads AKLIGYKTFFNEFVAYEHLS. At 545–583 the chain is on the extracellular side; the sequence is KFINLRKAAGPKFVNGVQQYMSIRSETIATYALCGFANF. The helical transmembrane segment at 584-594 threads the bilayer; sequence GSLGIVIGGLT. Residues 595-607 are Cytoplasmic-facing; sequence SIAPSRKRDIASG. Residues 608–630 traverse the membrane as a helical segment; sequence AMRALIAGTIACFMTACIAGMLS. The Extracellular portion of the chain corresponds to 631-705; the sequence is DTPVAINCHH…LNCGWIPNIP (75 aa).

It belongs to the concentrative nucleoside transporter (CNT) (TC 2.A.41) family. Homotrimer. In terms of tissue distribution, expressed in kidney; in the proximal tubule, glomerulus and cortical collecting duct.

It localises to the cell membrane. It carries out the reaction thymidine(out) + 2 Na(+)(out) = thymidine(in) + 2 Na(+)(in). The enzyme catalyses cytidine(out) + 2 Na(+)(out) = cytidine(in) + 2 Na(+)(in). It catalyses the reaction uridine(out) + 2 Na(+)(out) = uridine(in) + 2 Na(+)(in). The catalysed reaction is adenosine(out) + 2 Na(+)(out) = adenosine(in) + 2 Na(+)(in). It carries out the reaction guanosine(out) + 2 Na(+)(out) = guanosine(in) + 2 Na(+)(in). The enzyme catalyses inosine(out) + 2 Na(+)(out) = inosine(in) + 2 Na(+)(in). Its function is as follows. Sodium-dependent, pyrimidine- and purine-selective. Involved in the homeostasis of endogenous nucleosides. Exhibits the transport characteristics of the nucleoside transport system cib or N3 subtype (N3/cib) (with marked transport of both thymidine and inosine). Employs a 2:1 sodium/nucleoside ratio. Also able to transport gemcitabine, 3'-azido-3'-deoxythymidine (AZT), ribavirin and 3-deazauridine. The polypeptide is Solute carrier family 28 member 3 (Slc28a3) (Rattus norvegicus (Rat)).